A 1049-amino-acid polypeptide reads, in one-letter code: DEAD-box ATP-dependent RNA helicase 42 (1049 aa).

2 disordered regions span residues 1–279 (MGSS…DEID) and 299–358 (MPAA…DDEE). Residues 64–106 (KERDREERKAREREEREKEKERERARRREERDREERSRRREAA) are compositionally biased toward basic and acidic residues. Basic residues predominate over residues 118-131 (RKRRRRSSHHHHHH). Composition is skewed to basic and acidic residues over residues 161–170 (KKEEEQKQLD) and 181–199 (KEWQ…REQE). Residues 201 to 214 (AGVGTSAAAAAAPA) show a composition bias toward low complexity. Acidic residues predominate over residues 229–239 (DGEESDEEGNQ). Positions 262-272 (NGGDNANGANA) are enriched in low complexity. The span at 304-313 (VDDKNDKSAK) shows a compositional bias: basic and acidic residues. Residues 335–358 (EDSDSDYADDEDDEGGSEDEDDEE) show a composition bias toward acidic residues. The Q motif motif lies at 424–452 (KTWVQSGLTSKLLDTIKKLGFEKPMSIQA). The 179-residue stretch at 455 to 633 (LPIIMSGRDC…RKVLTKPVEI (179 aa)) folds into the Helicase ATP-binding domain. 468 to 475 (AKTGSGKT) lines the ATP pocket. Positions 581–584 (DEAD) match the DEAD box motif. One can recognise a Helicase C-terminal domain in the interval 644 to 805 (DITQLVEVRP…AVPEDLKGLA (162 aa)). The tract at residues 816–868 (TEQAHGTGYGGSGFKFNEEEDEARKSAKKAQAREYGYEEDKSDSDSDEEGGVR) is disordered. A compositionally biased stretch (acidic residues) spans 855–864 (DKSDSDSDEE). Residues 1012–1037 (TELSVKKAKAELKRVLEDCANHALNL) adopt a coiled-coil conformation.

It belongs to the DEAD box helicase family. DDX46/PRP5 subfamily.

It carries out the reaction ATP + H2O = ADP + phosphate + H(+). This is DEAD-box ATP-dependent RNA helicase 42 from Oryza sativa subsp. japonica (Rice).